The following is a 271-amino-acid chain: Pyrroline-5-carboxylate reductase (271 aa).

This sequence belongs to the pyrroline-5-carboxylate reductase family.

The protein localises to the cytoplasm. It catalyses the reaction L-proline + NADP(+) = (S)-1-pyrroline-5-carboxylate + NADPH + 2 H(+). The enzyme catalyses L-proline + NAD(+) = (S)-1-pyrroline-5-carboxylate + NADH + 2 H(+). It participates in amino-acid biosynthesis; L-proline biosynthesis; L-proline from L-glutamate 5-semialdehyde: step 1/1. Functionally, catalyzes the reduction of 1-pyrroline-5-carboxylate (PCA) to L-proline. The protein is Pyrroline-5-carboxylate reductase of Staphylococcus epidermidis (strain ATCC 35984 / DSM 28319 / BCRC 17069 / CCUG 31568 / BM 3577 / RP62A).